The following is a 123-amino-acid chain: Venom protein 29 (123 aa).

The first 18 residues, 1 to 18 (MNKLFLFTLLVTLWSVKG), serve as a signal peptide directing secretion.

Contains 3 disulfide bonds. Expressed by the venom gland.

It localises to the secreted. This Lychas mucronatus (Chinese swimming scorpion) protein is Venom protein 29.